The primary structure comprises 452 residues: MTAAHLTARRAGSLKGTVRAPGDKSISHRALILGALASGLTEVDGLLESDDVRRTAAAMQAFGAGVIRTGEGAWRVEGKGGFAEPGDVIDCGNAGTGVRLIMGAAAGFDLAATFTGDSSLRGRPMNRVLKPLGEMGASWICRAGGRLPLTLKGGSLKRIAYRLPEPSAQVKSAVLLAGLSADGGAEVFEAEATRDHTERMLRGFGAEVDVTEESAGRRIVLPGGQALKGTRIRVPGDPSSAAFPLVAALVTPGSQVTVEGMLLNPLRIGLLETLGDMGADLSVTNVRDEGGETVADVTARHSALEGVETPPERAPSMIDEYPILAVAAAFASGRTVMRGIGEMRVKESDRIALMAAGLAACGVEVEEEPEGMIVTGRGGAVRGGGRITTHGDHRIAMSHLVLGMAAEEPVSVDEPGMIATSFPGFVEMMRGLGADVGADVGGDVGADSPVGA.

Residues Lys24, Ser25, and Arg29 each coordinate 3-phosphoshikimate. Position 24 (Lys24) interacts with phosphoenolpyruvate. Positions 95 and 123 each coordinate phosphoenolpyruvate. 4 residues coordinate 3-phosphoshikimate: Ser167, Gln169, Asp319, and Lys346. Gln169 is a phosphoenolpyruvate binding site. The Proton acceptor role is filled by Asp319. Phosphoenolpyruvate contacts are provided by Arg350 and Arg394.

It belongs to the EPSP synthase family. As to quaternary structure, monomer.

The protein localises to the cytoplasm. It catalyses the reaction 3-phosphoshikimate + phosphoenolpyruvate = 5-O-(1-carboxyvinyl)-3-phosphoshikimate + phosphate. It participates in metabolic intermediate biosynthesis; chorismate biosynthesis; chorismate from D-erythrose 4-phosphate and phosphoenolpyruvate: step 6/7. Catalyzes the transfer of the enolpyruvyl moiety of phosphoenolpyruvate (PEP) to the 5-hydroxyl of shikimate-3-phosphate (S3P) to produce enolpyruvyl shikimate-3-phosphate and inorganic phosphate. The sequence is that of 3-phosphoshikimate 1-carboxyvinyltransferase from Phenylobacterium zucineum (strain HLK1).